The primary structure comprises 198 residues: Succinate dehydrogenase [ubiquinone] cytochrome b subunit, mitochondrial (198 aa).

A mitochondrion-targeting transit peptide spans 1–50; that stretch reads MSAMMVKLGLNKSALLLKPSAFSRAAALSSSRRLLFNTARTNFLSTSPLK. Over 51–99 the chain is Mitochondrial matrix; the sequence is NVASEMNTKAAIAEEQILNKQRAKRPISPHLTIYQPQLTWYLSSLHRIS. S93 and R97 together coordinate a ubiquinone. A helical transmembrane segment spans residues 100–120; that stretch reads LVLMGLGFYLFTILFGVSGLL. At 121 to 139 the chain is on the mitochondrial intermembrane side; it reads GLGLTTEKVSNWYHQKFSK. The helical transmembrane segment at 140–160 threads the bilayer; it reads ITEWSIKGSFAYLFAIHYGGA. Residue H156 coordinates heme. The Mitochondrial matrix portion of the chain corresponds to 161–175; that stretch reads IRHLIWDTAKELTLK. The helical transmembrane segment at 176–196 threads the bilayer; sequence GVYRTGYALIGFTAVLGTYLL. At 197–198 the chain is on the mitochondrial intermembrane side; sequence TL.

It belongs to the cytochrome b560 family. In terms of assembly, forms part of complex II containing four subunits: a flavoprotein (FP), an iron-sulfur protein (IP) and a cytochrome b composed of two integral membrane proteins. The cofactor is heme.

The protein localises to the mitochondrion inner membrane. The protein operates within carbohydrate metabolism; tricarboxylic acid cycle. In terms of biological role, membrane-anchoring mono-heme cytochrome b subunit of succinate dehydrogenase (SDH) that is involved in system II of the mitochondrial electron transport chain and is responsible for transferring electrons from succinate to ubiquinone (coenzyme Q). SDH3 and SDH4 form the membrane dimer that anchors the catalytic dimer formed by SDH1 and SDH2 to the matrix surface of the mitochondrial inner membrane. Electrons originating from the catalytic dimer enter the membrane dimer for ubiquinone reduction. The chain is Succinate dehydrogenase [ubiquinone] cytochrome b subunit, mitochondrial (SDH3) from Saccharomyces cerevisiae (strain ATCC 204508 / S288c) (Baker's yeast).